Here is a 398-residue protein sequence, read N- to C-terminus: Carbamoyl phosphate synthase small chain (398 aa).

The CPSase stretch occupies residues 1 to 204 (MSPLLPSFPP…PAYGTLDTGK (204 aa)). L-glutamine-binding residues include S53, G256, and G258. In terms of domain architecture, Glutamine amidotransferase type-1 spans 208–395 (KVVAYDFGVK…VELMNAASKK (188 aa)). Catalysis depends on C284, which acts as the Nucleophile. 5 residues coordinate L-glutamine: L285, Q288, N326, G328, and F329. Active-site residues include H368 and E370.

Belongs to the CarA family. As to quaternary structure, composed of two chains; the small (or glutamine) chain promotes the hydrolysis of glutamine to ammonia, which is used by the large (or ammonia) chain to synthesize carbamoyl phosphate. Tetramer of heterodimers (alpha,beta)4.

The catalysed reaction is hydrogencarbonate + L-glutamine + 2 ATP + H2O = carbamoyl phosphate + L-glutamate + 2 ADP + phosphate + 2 H(+). It carries out the reaction L-glutamine + H2O = L-glutamate + NH4(+). The protein operates within amino-acid biosynthesis; L-arginine biosynthesis; carbamoyl phosphate from bicarbonate: step 1/1. Its pathway is pyrimidine metabolism; UMP biosynthesis via de novo pathway; (S)-dihydroorotate from bicarbonate: step 1/3. Small subunit of the glutamine-dependent carbamoyl phosphate synthetase (CPSase). CPSase catalyzes the formation of carbamoyl phosphate from the ammonia moiety of glutamine, carbonate, and phosphate donated by ATP, constituting the first step of 2 biosynthetic pathways, one leading to arginine and/or urea and the other to pyrimidine nucleotides. The small subunit (glutamine amidotransferase) binds and cleaves glutamine to supply the large subunit with the substrate ammonia. The polypeptide is Carbamoyl phosphate synthase small chain (Polynucleobacter necessarius subsp. necessarius (strain STIR1)).